Consider the following 192-residue polypeptide: E3 ubiquitin-protein ligase RNF183 (192 aa).

Topologically, residues 1-161 are cytoplasmic; it reads MAEQQGRELE…RECFRNPQFR (161 aa). The RING-type zinc-finger motif lies at 13 to 60; the sequence is CPVCWNPFNNTFHTPKMLDCCHSFCVECLAHLSLVTPARRRLLCPLCR. The chain crosses the membrane as a helical; Anchor for type IV membrane protein span at residues 162–182; sequence IFAYLMAVILSVTLLLIFSIF. Residues 183 to 192 lie on the Lumenal side of the membrane; sequence WTKQFLWGVG.

Interacts with FATE1. Interacts with SEC16A. Interacts with BCL2L1. Autoubiquitinated (in vitro). As to expression, kidney and testis.

It localises to the endoplasmic reticulum membrane. The protein resides in the endoplasmic reticulum. It is found in the golgi apparatus. Its subcellular location is the cis-Golgi network membrane. The protein localises to the lysosome membrane. It carries out the reaction S-ubiquitinyl-[E2 ubiquitin-conjugating enzyme]-L-cysteine + [acceptor protein]-L-lysine = [E2 ubiquitin-conjugating enzyme]-L-cysteine + N(6)-ubiquitinyl-[acceptor protein]-L-lysine.. Its pathway is protein modification; protein ubiquitination. In terms of biological role, acts as an E3 ubiquitin ligase catalyzing the covalent attachment of ubiquitin moieties onto substrate proteins. Triggers apoptosis in response to prolonged ER stress by mediating the polyubiquitination and subsequent proteasomal degradation of BCL2L1. May collaborate with FATE1 to restrain BIK protein levels thus regulating apoptotic signaling. The polypeptide is E3 ubiquitin-protein ligase RNF183 (RNF183) (Homo sapiens (Human)).